The chain runs to 239 residues: Fumarate reductase iron-sulfur subunit (239 aa).

Residues 5–95 (LTIRVFKYDP…DGVITLLPLP (91 aa)) enclose the 2Fe-2S ferredoxin-type domain. Positions 57, 62, 65, and 77 each coordinate [2Fe-2S] cluster. A 4Fe-4S ferredoxin-type domain is found at 142–171 (AQEVFELDRCIECGCCIAACGTKIMREDFV). 3 residues coordinate [4Fe-4S] cluster: C151, C154, and C157. Residues C161, C208, and C214 each contribute to the [3Fe-4S] cluster site. C218 is a binding site for [4Fe-4S] cluster.

Belongs to the succinate dehydrogenase/fumarate reductase iron-sulfur protein family. Part of an enzyme complex containing three subunits: a flavoprotein (frdA), an iron-sulfur protein (frdB), and diheme cytochrome b (frdC). Requires [2Fe-2S] cluster as cofactor. The cofactor is [3Fe-4S] cluster. It depends on [4Fe-4S] cluster as a cofactor.

Its subcellular location is the cell inner membrane. The catalysed reaction is a menaquinone + succinate = a menaquinol + fumarate. The fumarate reductase enzyme complex is required for fumarate respiration using formate or sulfide as electron donor. In Wolinella succinogenes (strain ATCC 29543 / DSM 1740 / CCUG 13145 / JCM 31913 / LMG 7466 / NCTC 11488 / FDC 602W) (Vibrio succinogenes), this protein is Fumarate reductase iron-sulfur subunit (frdB).